The chain runs to 359 residues: Cinnamyl alcohol dehydrogenase 8 (359 aa).

Cysteine 46 provides a ligand contact to Zn(2+). Serine 48 serves as a coordination point for NADP(+). The Zn(2+) site is built by histidine 68, glutamate 69, cysteine 99, cysteine 102, cysteine 105, cysteine 113, and cysteine 162. NADP(+) contacts are provided by residues threonine 166, 187–192 (GLGGLG), 210–215 (STSEKK), threonine 250, glycine 274, and 297–299 (SMI).

It belongs to the zinc-containing alcohol dehydrogenase family. As to quaternary structure, homodimer. Zn(2+) is required as a cofactor. As to expression, expressed in the differentiation and elongation zones of primary and lateral roots. Expressed in the hypocotyl, cotyledon veins, vasculature of the first rosette leaves, hydathodes and trichomes. In stems, expressed in the vascular cambium and developing xylem tissues. Expressed in the style, anthers, stamen filaments, stigmatic regions in flowers, and abscission and style regions of siliques.

It carries out the reaction (E)-cinnamyl alcohol + NADP(+) = (E)-cinnamaldehyde + NADPH + H(+). Its pathway is aromatic compound metabolism; phenylpropanoid biosynthesis. Its function is as follows. Involved in lignin biosynthesis. Catalyzes the final step specific for the production of lignin monomers. Catalyzes the NADPH-dependent reduction of coniferaldehyde, 5-hydroxyconiferaldehyde, sinapaldehyde, 4-coumaraldehyde and caffeyl aldehyde to their respective alcohols. The sequence is that of Cinnamyl alcohol dehydrogenase 8 (CAD8) from Arabidopsis thaliana (Mouse-ear cress).